The following is a 267-amino-acid chain: tRNA pseudouridine synthase A (267 aa).

Catalysis depends on aspartate 52, which acts as the Nucleophile. Residue tyrosine 110 coordinates substrate.

This sequence belongs to the tRNA pseudouridine synthase TruA family. In terms of assembly, homodimer.

It carries out the reaction uridine(38/39/40) in tRNA = pseudouridine(38/39/40) in tRNA. Formation of pseudouridine at positions 38, 39 and 40 in the anticodon stem and loop of transfer RNAs. This is tRNA pseudouridine synthase A from Paraburkholderia phymatum (strain DSM 17167 / CIP 108236 / LMG 21445 / STM815) (Burkholderia phymatum).